The primary structure comprises 687 residues: Homoaconitase, mitochondrial (687 aa).

A mitochondrion-targeting transit peptide spans 1 to 18 (MFAFRNRAVTQTLLVRRY). [4Fe-4S] cluster contacts are provided by Cys-340, Cys-400, and Cys-403. Residues 481–490 (EAEADAEAAE) are compositionally biased toward acidic residues. The tract at residues 481–500 (EAEADAEAAESDPAPSGGVL) is disordered.

This sequence belongs to the aconitase/IPM isomerase family. [4Fe-4S] cluster serves as cofactor.

Its subcellular location is the mitochondrion. The catalysed reaction is (2R,3S)-homoisocitrate = cis-homoaconitate + H2O. It participates in amino-acid biosynthesis; L-lysine biosynthesis via AAA pathway; L-alpha-aminoadipate from 2-oxoglutarate: step 3/5. In terms of biological role, catalyzes the reversible hydration of cis-homoaconitate to (2R,3S)-homoisocitrate, a step in the alpha-aminoadipate pathway for lysine biosynthesis. The protein is Homoaconitase, mitochondrial (LYS4) of Yarrowia lipolytica (strain CLIB 122 / E 150) (Yeast).